The following is a 361-amino-acid chain: Histidinol-phosphate aminotransferase (361 aa).

The residue at position 221 (lysine 221) is an N6-(pyridoxal phosphate)lysine.

The protein belongs to the class-II pyridoxal-phosphate-dependent aminotransferase family. Histidinol-phosphate aminotransferase subfamily. Pyridoxal 5'-phosphate serves as cofactor.

The enzyme catalyses L-histidinol phosphate + 2-oxoglutarate = 3-(imidazol-4-yl)-2-oxopropyl phosphate + L-glutamate. Its pathway is amino-acid biosynthesis; L-histidine biosynthesis; L-histidine from 5-phospho-alpha-D-ribose 1-diphosphate: step 7/9. This chain is Histidinol-phosphate aminotransferase, found in Methanocella arvoryzae (strain DSM 22066 / NBRC 105507 / MRE50).